A 100-amino-acid polypeptide reads, in one-letter code: NADH-quinone oxidoreductase subunit K (100 aa).

Helical transmembrane passes span 4–24 (LTHG…GLVI), 28–48 (LLFM…AFVV), and 60–80 (VMYI…LALL).

It belongs to the complex I subunit 4L family. NDH-1 is composed of 13 different subunits. Subunits NuoA, H, J, K, L, M, N constitute the membrane sector of the complex.

Its subcellular location is the cell inner membrane. It carries out the reaction a quinone + NADH + 5 H(+)(in) = a quinol + NAD(+) + 4 H(+)(out). NDH-1 shuttles electrons from NADH, via FMN and iron-sulfur (Fe-S) centers, to quinones in the respiratory chain. The immediate electron acceptor for the enzyme in this species is believed to be ubiquinone. Couples the redox reaction to proton translocation (for every two electrons transferred, four hydrogen ions are translocated across the cytoplasmic membrane), and thus conserves the redox energy in a proton gradient. The chain is NADH-quinone oxidoreductase subunit K from Salmonella agona (strain SL483).